Reading from the N-terminus, the 882-residue chain is Molybdenum cofactor sulfurase (882 aa).

Lys265 carries the N6-(pyridoxal phosphate)lysine modification. Cys425 is a catalytic residue. The segment at 496–546 is disordered; that stretch reads GQPLPLATPGEAGAPPEDSEAQNAVPAARARGSSSPQEDTSPHSGVWNNSP. Over residues 527 to 546 the composition is skewed to polar residues; the sequence is GSSSPQEDTSPHSGVWNNSP. 2 positions are modified to phosphoserine: Ser528 and Ser530. Positions 707–868 constitute an MOSC domain; the sequence is KQSSDFQRNA…LSVGSQVLPL (162 aa).

It belongs to the class-V pyridoxal-phosphate-dependent aminotransferase family. MOCOS subfamily. Pyridoxal 5'-phosphate is required as a cofactor. Ubiquitously expressed.

It carries out the reaction Mo-molybdopterin + L-cysteine + AH2 = thio-Mo-molybdopterin + L-alanine + A + H2O. It functions in the pathway cofactor biosynthesis; molybdopterin biosynthesis. Sulfurates the molybdenum cofactor. Sulfation of molybdenum is essential for xanthine dehydrogenase (XDH) and aldehyde oxidase (ADO) enzymes in which molybdenum cofactor is liganded by 1 oxygen and 1 sulfur atom in active form. The sequence is that of Molybdenum cofactor sulfurase from Bos taurus (Bovine).